We begin with the raw amino-acid sequence, 523 residues long: Tyrosine/DOPA decarboxylase 5 (523 aa).

Over residues 1-19 (MGSLPTDNLESMSICSQNP) the composition is skewed to polar residues. 2 disordered regions span residues 1–20 (MGSL…QNPL) and 47–66 (SRSQ…APNH). Lys321 is modified (N6-(pyridoxal phosphate)lysine).

Belongs to the group II decarboxylase family. In terms of assembly, homodimer. Pyridoxal 5'-phosphate serves as cofactor. Roots.

It carries out the reaction L-tyrosine + H(+) = tyramine + CO2. The enzyme catalyses L-dopa + H(+) = dopamine + CO2. It catalyses the reaction 5-hydroxy-L-tryptophan + H(+) = serotonin + CO2. May play an important role in providing precursors for alkaloid synthesis in the roots and germinating seedlings. The protein is Tyrosine/DOPA decarboxylase 5 (TYDC5) of Papaver somniferum (Opium poppy).